The sequence spans 157 residues: Transcriptional repressor NrdR (157 aa).

A zinc finger spans residues 3 to 34 (CPFCGHMESQVKDSRPSEDGAAIRRRRLCPEC). In terms of domain architecture, ATP-cone spans 49-139 (LTIVKRSGRR…VYRDFRETSD (91 aa)).

Belongs to the NrdR family. Zn(2+) is required as a cofactor.

Its function is as follows. Negatively regulates transcription of bacterial ribonucleotide reductase nrd genes and operons by binding to NrdR-boxes. This Caulobacter sp. (strain K31) protein is Transcriptional repressor NrdR.